Reading from the N-terminus, the 190-residue chain is Somatotropin (190 aa).

The first 17 residues, 1-17, serve as a signal peptide directing secretion; that stretch reads MNRVILLLSVMCVGVSS. 2 disulfides stabilise this stretch: C69-C163 and C180-C188.

Belongs to the somatotropin/prolactin family.

It localises to the secreted. Functionally, growth hormone plays an important role in growth control and is involved in the regulation of several anabolic processes. Implicated as an osmoregulatory substance important for seawater adaptation. This is Somatotropin (gh) from Paralichthys olivaceus (Bastard halibut).